The following is a 279-amino-acid chain: MDLSFTKMHGTGNDYIYINCFKEKFTVEDAIKYSPILSHRHYSIGADGIILIMPSDKADVQMRMFNYDGSESEMCGNGIRCVAKYAYDRGISKNNPMKIETLRGILEAELFLKDEEVDTVEISMSSPILEGLKIPTTIDKTPIINEPIIFNDKTYYFTAVSMGNPHAVIFVNDLHNMDISSIGSYMENNSIFPNRTNVEFVEIINRGEVKQRTWERGSGETLACGTGASAVCVAGFISGRTDNIILNHLLGGDLILRYENDNVFMKGEARYCFEGTITL.

Substrate is bound by residues Asn13 and Asn66. Residue Cys75 is the Proton donor of the active site. Substrate is bound by residues 76 to 77 (GN), Asn164, Asn197, and 215 to 216 (ER). Cys224 (proton acceptor) is an active-site residue. Position 225 to 226 (225 to 226 (GT)) interacts with substrate.

The protein belongs to the diaminopimelate epimerase family. Homodimer.

The protein localises to the cytoplasm. It carries out the reaction (2S,6S)-2,6-diaminopimelate = meso-2,6-diaminopimelate. It functions in the pathway amino-acid biosynthesis; L-lysine biosynthesis via DAP pathway; DL-2,6-diaminopimelate from LL-2,6-diaminopimelate: step 1/1. In terms of biological role, catalyzes the stereoinversion of LL-2,6-diaminopimelate (L,L-DAP) to meso-diaminopimelate (meso-DAP), a precursor of L-lysine and an essential component of the bacterial peptidoglycan. This is Diaminopimelate epimerase from Brachyspira hyodysenteriae (strain ATCC 49526 / WA1).